Consider the following 236-residue polypeptide: MNNPRTVSDTKRAFYHNHARPINSIYRRVVEELLVEIHLLRVNQTFVYDPVFALGVVTTFERFMQGYHPPADQTSIFNAICLAQELDPQQVQQDAQELLGRVRGQSLESLLDWISTAASLGGDEQQNRLRAIASNPTFKYSRLFAVGLFTLLEQAEPELGKDEARLLQVLQQVGEVMHLPVEKMQKDLEQYRSNLEKMTQARKTLEDIVAAERKRRQQNAAPDRSPESASATEAPN.

The stretch at P180–A220 forms a coiled coil. The segment at E206–N236 is disordered. A compositionally biased stretch (polar residues) spans E227–N236.

It belongs to the THF1 family.

Functionally, may be involved in photosynthetic membrane biogenesis. The sequence is that of Protein Thf1 from Cyanothece sp. (strain PCC 7425 / ATCC 29141).